Here is a 159-residue protein sequence, read N- to C-terminus: Nanos homolog 3 (159 aa).

Residues 42 to 87 (QEMQSDADSDEQAAALLESPSGPIRSRDSPEQNTSPGGGKPKSSPA) are disordered. The Nanos-type zinc-finger motif lies at 91-145 (FCSFCKHNGETEAVYTSHYLKNRDGDVMCPYLRQYKCPLCGATGAKAHTKRFCPM). Zn(2+) contacts are provided by Cys92, Cys95, His108, Cys119, Cys127, Cys130, His138, and Cys143. 2 short sequence motifs (C2HC) span residues 92-119 (CSFC…DVMC) and 127-143 (CPLC…KRFC). Residues 92-159 (CSFCKHNGET…YCSVYAKSTW (68 aa)) form an interaction with mylpfa region.

The protein belongs to the nanos family. As to quaternary structure, interacts (via C-terminus) with myosin mylpfa/mylz2; the interaction negatively regulates mylpfa phosphorylation. As to expression, in the embryo, displays early ubiquitous expression before being restricted to primordial germ cells in a 3'-UTR-dependent manner. Expressed in early stage germ cells in larval and adult ovaries.

The protein resides in the cytoplasm. The protein localises to the perinuclear region. In terms of biological role, RNA-binding protein which binds to RNA with no sequence specificity. Probably represses translation of specific mRNAs. Essential for the development of primordial germ cells (PGCs) by ensuring their proper migration and survival but is not required for PGC specification. Also required to maintain oocyte production in the adult ovary. Negatively regulates phosphorylation of myosin mylpfa/mylz2. This is Nanos homolog 3 from Danio rerio (Zebrafish).